Here is a 137-residue protein sequence, read N- to C-terminus: Large ribosomal subunit protein uL16 (137 aa).

This sequence belongs to the universal ribosomal protein uL16 family. In terms of assembly, part of the 50S ribosomal subunit.

Binds 23S rRNA and is also seen to make contacts with the A and possibly P site tRNAs. This Azotobacter vinelandii (strain DJ / ATCC BAA-1303) protein is Large ribosomal subunit protein uL16.